We begin with the raw amino-acid sequence, 1237 residues long: Structural protein VP1 (1237 aa).

The PPPDE domain maps to 1006 to 1222 (EPLRTLLFKL…ENDVRIAMIH (217 aa)). Residues His1040 and Cys1192 contribute to the active site.

It is found in the virion. The protein is Structural protein VP1 of Rice ragged stunt virus (isolate Thailand) (RRSV).